Reading from the N-terminus, the 511-residue chain is E3 ubiquitin-protein ligase TRIM7 (511 aa).

The segment at 29–82 (CSICLELFREPVSVECGHSFCRACIGRCWERPGAGSVGAATRAPPFPLPCPQCR) adopts an RING-type zinc-finger fold. A Phosphoserine; by RPS6KA5 modification is found at Ser107. The B box-type zinc-finger motif lies at 125–166 (AAAARCGQHGEPFKLYCQDDGRAICVVCDRAREHREHAVLPL). Zn(2+) is bound by residues Cys130, His133, Cys152, and His158. Positions 166–263 (LDEAVQEAKE…AQLGVEITQL (98 aa)) form a coiled coil. The B30.2/SPRY domain occupies 324 to 511 (MLKKFKEDLR…STGTYLRIWP (188 aa)).

It belongs to the TRIM/RBCC family. In terms of assembly, forms homodimers. Interacts with GNIP2. Interacts with GYG1. Interacts with RNF187 (via C-terminus). In terms of processing, phosphorylated at Ser-107 by RPS6KA5/MSK1, which stimulates the ubiquitin ligase activity. Post-translationally, auto-ubiquitinates via 'Lys-63'-linked polyubiquitination. As to expression, skeletal muscle and placenta, at lower levels in heart, brain and pancreas. Isoform 1 is widely expressed with high level in testis, kidney and heart.

It is found in the nucleus. The protein resides in the cytoplasm. It localises to the golgi apparatus. The enzyme catalyses S-ubiquitinyl-[E2 ubiquitin-conjugating enzyme]-L-cysteine + [acceptor protein]-L-lysine = [E2 ubiquitin-conjugating enzyme]-L-cysteine + N(6)-ubiquitinyl-[acceptor protein]-L-lysine.. It functions in the pathway protein modification; protein ubiquitination. E3 ubiquitin-protein ligase that have both tumor-promoting and tumor-suppressing activities and functions in several biological processes including innate immunity, regulation of ferroptosis as well as cell proliferation and migration. Acts as an antiviral effector against multiple viruses by targeting specific viral proteins for ubiquitination and degradation including norovirus NTPase protein or SARS-CoV-2 NSP5 and NSP8 proteins. Mechanistically, recognizes the C-terminal glutamine-containing motif usually generated by viral proteases that process the polyproteins and trigger their ubiquitination and subsequent degradation. Mediates 'Lys-63'-linked polyubiquitination and stabilization of the JUN coactivator RNF187 in response to growth factor signaling via the MEK/ERK pathway, thereby regulating JUN transactivation and cellular proliferation. Promotes the TLR4-mediated signaling activation through its E3 ligase domain leading to production of pro-inflammatory cytokines and type I interferon. Also plays a negative role in the regulation of exogenous cytosolic DNA virus-triggered immune response. Mechanistically, enhances the 'Lys-48'-linked ubiquitination of STING1 leading to its proteasome-dependent degradation. Mediates the ubiquitination of the SIN3-HDAC chromatin remodeling complex component BRMS1. Modulates NCOA4-mediated ferritinophagy and ferroptosis in glioblastoma cells by ubiquitinating NCOA4, leading to its degradation. Functionally, (Microbial infection) Promotes Zika virus replication by mediating envelope protein E ubiquitination. The chain is E3 ubiquitin-protein ligase TRIM7 (TRIM7) from Homo sapiens (Human).